Here is a 161-residue protein sequence, read N- to C-terminus: Endoribonuclease YbeY (161 aa).

H121, H125, and H131 together coordinate Zn(2+).

It belongs to the endoribonuclease YbeY family. Requires Zn(2+) as cofactor.

It localises to the cytoplasm. Functionally, single strand-specific metallo-endoribonuclease involved in late-stage 70S ribosome quality control and in maturation of the 3' terminus of the 16S rRNA. The chain is Endoribonuclease YbeY from Xylella fastidiosa (strain M23).